Here is a 150-residue protein sequence, read N- to C-terminus: Cytochrome c oxidase subunit 5A, mitochondrial (150 aa).

A mitochondrion-targeting transit peptide spans Met1–Tyr41. An SIFI-degron motif is present at residues Leu2–Ala17. Lys87 and Lys113 each carry N6-acetyllysine. Thr141 carries the phosphothreonine modification.

The protein belongs to the cytochrome c oxidase subunit 5A family. In terms of assembly, component of the cytochrome c oxidase (complex IV, CIV), a multisubunit enzyme composed of 14 subunits. The complex is composed of a catalytic core of 3 subunits MT-CO1, MT-CO2 and MT-CO3, encoded in the mitochondrial DNA, and 11 supernumerary subunits COX4I, COX5A, COX5B, COX6A, COX6B, COX6C, COX7A, COX7B, COX7C, COX8 and NDUFA4, which are encoded in the nuclear genome. The complex exists as a monomer or a dimer and forms supercomplexes (SCs) in the inner mitochondrial membrane with NADH-ubiquinone oxidoreductase (complex I, CI) and ubiquinol-cytochrome c oxidoreductase (cytochrome b-c1 complex, complex III, CIII), resulting in different assemblies (supercomplex SCI(1)III(2)IV(1) and megacomplex MCI(2)III(2)IV(2)). Interacts with AFG1L. Interacts with RAB5IF. In response to mitochondrial stress, the precursor protein is ubiquitinated by the SIFI complex in the cytoplasm before mitochondrial import, leading to its degradation. Within the SIFI complex, UBR4 initiates ubiquitin chain that are further elongated or branched by KCMF1.

Its subcellular location is the mitochondrion inner membrane. It participates in energy metabolism; oxidative phosphorylation. Component of the cytochrome c oxidase, the last enzyme in the mitochondrial electron transport chain which drives oxidative phosphorylation. The respiratory chain contains 3 multisubunit complexes succinate dehydrogenase (complex II, CII), ubiquinol-cytochrome c oxidoreductase (cytochrome b-c1 complex, complex III, CIII) and cytochrome c oxidase (complex IV, CIV), that cooperate to transfer electrons derived from NADH and succinate to molecular oxygen, creating an electrochemical gradient over the inner membrane that drives transmembrane transport and the ATP synthase. Cytochrome c oxidase is the component of the respiratory chain that catalyzes the reduction of oxygen to water. Electrons originating from reduced cytochrome c in the intermembrane space (IMS) are transferred via the dinuclear copper A center (CU(A)) of subunit 2 and heme A of subunit 1 to the active site in subunit 1, a binuclear center (BNC) formed by heme A3 and copper B (CU(B)). The BNC reduces molecular oxygen to 2 water molecules using 4 electrons from cytochrome c in the IMS and 4 protons from the mitochondrial matrix. The protein is Cytochrome c oxidase subunit 5A, mitochondrial (COX5A) of Cebuella pygmaea (Pygmy marmoset).